A 1223-amino-acid polypeptide reads, in one-letter code: DNA-directed RNA polymerase subunit beta' (1223 aa).

Zn(2+) contacts are provided by C60, C62, C75, and C78. Residues D449, D451, and D453 each contribute to the Mg(2+) site. Residues C818, C892, C899, and C902 each coordinate Zn(2+).

Belongs to the RNA polymerase beta' chain family. As to quaternary structure, the RNAP catalytic core consists of 2 alpha, 1 beta, 1 beta' and 1 omega subunit. When a sigma factor is associated with the core the holoenzyme is formed, which can initiate transcription. Requires Mg(2+) as cofactor. Zn(2+) is required as a cofactor.

The enzyme catalyses RNA(n) + a ribonucleoside 5'-triphosphate = RNA(n+1) + diphosphate. Its function is as follows. DNA-dependent RNA polymerase catalyzes the transcription of DNA into RNA using the four ribonucleoside triphosphates as substrates. This is DNA-directed RNA polymerase subunit beta' from Lactobacillus gasseri (strain ATCC 33323 / DSM 20243 / BCRC 14619 / CIP 102991 / JCM 1131 / KCTC 3163 / NCIMB 11718 / NCTC 13722 / AM63).